We begin with the raw amino-acid sequence, 174 residues long: Ribosome maturation factor RimM (174 aa).

Residues 96 to 169 (KDTFFICDLI…KMVVDLPQGL (74 aa)) form the PRC barrel domain.

The protein belongs to the RimM family. Binds ribosomal protein uS19.

It is found in the cytoplasm. In terms of biological role, an accessory protein needed during the final step in the assembly of 30S ribosomal subunit, possibly for assembly of the head region. Essential for efficient processing of 16S rRNA. May be needed both before and after RbfA during the maturation of 16S rRNA. It has affinity for free ribosomal 30S subunits but not for 70S ribosomes. In Acetivibrio thermocellus (strain ATCC 27405 / DSM 1237 / JCM 9322 / NBRC 103400 / NCIMB 10682 / NRRL B-4536 / VPI 7372) (Clostridium thermocellum), this protein is Ribosome maturation factor RimM.